The following is a 366-amino-acid chain: Chorismate synthase (366 aa).

Arginine 48 and arginine 54 together coordinate NADP(+). FMN is bound by residues arginine 125–serine 127, asparagine 238–alanine 239, glycine 278, lysine 293–serine 297, and arginine 319.

It belongs to the chorismate synthase family. In terms of assembly, homotetramer. FMNH2 serves as cofactor.

The catalysed reaction is 5-O-(1-carboxyvinyl)-3-phosphoshikimate = chorismate + phosphate. It functions in the pathway metabolic intermediate biosynthesis; chorismate biosynthesis; chorismate from D-erythrose 4-phosphate and phosphoenolpyruvate: step 7/7. Functionally, catalyzes the anti-1,4-elimination of the C-3 phosphate and the C-6 proR hydrogen from 5-enolpyruvylshikimate-3-phosphate (EPSP) to yield chorismate, which is the branch point compound that serves as the starting substrate for the three terminal pathways of aromatic amino acid biosynthesis. This reaction introduces a second double bond into the aromatic ring system. In Paraburkholderia phymatum (strain DSM 17167 / CIP 108236 / LMG 21445 / STM815) (Burkholderia phymatum), this protein is Chorismate synthase.